The sequence spans 111 residues: Ig kappa chain V-III region PC 2485/PC 4039 (111 aa).

A framework-1 region spans residues 1-23 (DIVLTQSPASLAVSLGQRATISC). Residues cysteine 23 and cysteine 92 are joined by a disulfide bond. The tract at residues 24–38 (RASKSVSTSGYSYMH) is complementarity-determining-1. A framework-2 region spans residues 39 to 53 (WYQQKPGQPPKLLIY). The tract at residues 54 to 60 (LASSLES) is complementarity-determining-2. The tract at residues 61 to 92 (GVPARFSGSGSGTDFTLNIQPVEEEDAAIYYC) is framework-3. The interval 93–101 (QHSRELPLT) is complementarity-determining-3. Residues 102-111 (FGAGTKLELK) form a framework-4 region.

This is Ig kappa chain V-III region PC 2485/PC 4039 from Mus musculus (Mouse).